The sequence spans 389 residues: Chalcone synthase 3 (389 aa).

Cys164 is a catalytic residue.

The protein belongs to the thiolase-like superfamily. Chalcone/stilbene synthases family.

The enzyme catalyses (E)-4-coumaroyl-CoA + 3 malonyl-CoA + 3 H(+) = 2',4,4',6'-tetrahydroxychalcone + 3 CO2 + 4 CoA. It participates in secondary metabolite biosynthesis; flavonoid biosynthesis. Its function is as follows. The primary product of this enzyme is 4,2',4',6'-tetrahydroxychalcone (also termed naringenin-chalcone or chalcone) which can under specific conditions spontaneously isomerize into naringenin. The sequence is that of Chalcone synthase 3 (CHS3) from Trifolium subterraneum (Subterranean clover).